The following is an 860-amino-acid chain: Ribosome-releasing factor 2, mitochondrial (860 aa).

The tr-type G domain maps to 45–337; it reads DRTRNIGIIA…AVVNFLPSPL (293 aa). Residues 54–61, 118–122, and 172–175 contribute to the GTP site; these read AHIDAGKT, DTPGH, and NKMD.

Belongs to the TRAFAC class translation factor GTPase superfamily. Classic translation factor GTPase family. EF-G/EF-2 subfamily.

It is found in the mitochondrion. In terms of biological role, mitochondrial GTPase that mediates the disassembly of ribosomes from messenger RNA at the termination of mitochondrial protein biosynthesis. Not involved in the GTP-dependent ribosomal translocation step during translation elongation. The sequence is that of Ribosome-releasing factor 2, mitochondrial from Debaryomyces hansenii (strain ATCC 36239 / CBS 767 / BCRC 21394 / JCM 1990 / NBRC 0083 / IGC 2968) (Yeast).